Reading from the N-terminus, the 92-residue chain is Small ribosomal subunit protein uS19 (92 aa).

Residues 1-27 are disordered; it reads MARSIKKGPFADDHLKKKVEAQSGSEK. A compositionally biased stretch (basic and acidic residues) spans 9–27; that stretch reads PFADDHLKKKVEAQSGSEK.

Belongs to the universal ribosomal protein uS19 family.

Its function is as follows. Protein S19 forms a complex with S13 that binds strongly to the 16S ribosomal RNA. The polypeptide is Small ribosomal subunit protein uS19 (Staphylococcus saprophyticus subsp. saprophyticus (strain ATCC 15305 / DSM 20229 / NCIMB 8711 / NCTC 7292 / S-41)).